A 311-amino-acid polypeptide reads, in one-letter code: MNVKPSLDELFERRINFPDFEPQERLARLVGLDEHKDRLSKILGLLVNPYGIQEWAKKYHPDARAAVDTVLRRPPLVVLAGDVGSGKTELAETIGDAVARQEDIDITLYPLSLATRGQGRVGEMTQLVSAAFDYTIEAADKLKNTNGKARGAVLLLIDEADALAQSRENAQMHHEDRAGVNAFIRGIDRIANQKLPAAVLMCTNRLKALDPAVQRRAAEILTFSRPNDEQRHYLLHSKLTGLGLNSTAVEELVRLTGPRDPNSPGFTFSDITQRLIPSIILAAYPYNAVSVHSALQVVNKMTPTPAFIDRQ.

Residues 84-89 and 215-216 contribute to the ATP site; these read GSGKTE and RR.

Belongs to the AAA ATPase family. In terms of assembly, homohexamer. Forms a 1:1:6 CdnC:Cap7:Cap6 complex.

Regulates complex assembly in a CBASS antivirus system. CBASS (cyclic oligonucleotide-based antiphage signaling system) provides immunity against bacteriophage. The CD-NTase protein synthesizes cyclic nucleotides in response to infection; these serve as specific second messenger signals. The signals activate a diverse range of effectors, leading to bacterial cell death and thus abortive phage infection. A type III-C(AAA) CBASS system. In terms of biological role, binds and disassembles an active CdnC:Cap7 (Cap7 is also called HORMA) complex, inhibiting the complex's ability to synthesize cyclic nucleotide second messengers. An AAA+-ATPase remodeler, in the absence of foreign threat Cap6 (also called Trip13) probably maintains the Cap7 protein in its open, inactive state. Once activated (presumably by a bacteriophage protein) Cap7 binds to and activates its cognate CD-NTase (CdnC in this bacteria) to synthesize cAAA, a cyclic nucleotide second messenger. cAAA activates the NucC endonuclease which degrades all DNA in the infected cell, causing cell death and abortive phage infection. Its function is as follows. Protects E.coli strain JP313 against bacteriophage lambda cI- infection. When the cdnC-cap7-cap6-nucC operon is transformed into a susceptible E.coli strain it confers bacteriophage lambda cI- immunity. Mutations in the sensor (Cap7 also called HORMA) or effector proteins (CdnC, NucC) but not the disassembly protein (Cap6 also called Trip13) no longer confer immunity. The presence of the intact operon leads to culture collapse and cell death, which occurs before the phage has finished its replication cycle, thus protecting non-infected bacteria by aborting the phage infection and preventing its propagation. This Escherichia coli (strain MS 115-1) protein is CD-NTase-associated protein 6.